Reading from the N-terminus, the 518-residue chain is 2-isopropylmalate synthase (518 aa).

In terms of domain architecture, Pyruvate carboxyltransferase spans 4 to 266 (INVFDTTLRD…DSSLNLHELK (263 aa)). Mn(2+) is bound by residues Asp13, His201, His203, and Asn237. Residues 391–518 (EFLSLQVHYG…GLKRQTAVGS (128 aa)) form a regulatory domain region.

Belongs to the alpha-IPM synthase/homocitrate synthase family. LeuA type 1 subfamily. Homodimer. Mn(2+) is required as a cofactor.

It localises to the cytoplasm. The enzyme catalyses 3-methyl-2-oxobutanoate + acetyl-CoA + H2O = (2S)-2-isopropylmalate + CoA + H(+). It functions in the pathway amino-acid biosynthesis; L-leucine biosynthesis; L-leucine from 3-methyl-2-oxobutanoate: step 1/4. Catalyzes the condensation of the acetyl group of acetyl-CoA with 3-methyl-2-oxobutanoate (2-ketoisovalerate) to form 3-carboxy-3-hydroxy-4-methylpentanoate (2-isopropylmalate). The protein is 2-isopropylmalate synthase of Bacillus velezensis (strain DSM 23117 / BGSC 10A6 / LMG 26770 / FZB42) (Bacillus amyloliquefaciens subsp. plantarum).